A 291-amino-acid chain; its full sequence is rRNA 2'-O-methyltransferase fibrillarin (291 aa).

Basic and acidic residues-rich tracts occupy residues 1–12 and 20–29; these read MKKTNKRPDGRK and FRSDKGEGRG. The disordered stretch occupies residues 1 to 45; sequence MKKTNKRPDGRKFQKGGKPFRSDKGEGRGRMNNKKKGSVNAGLDR. 2 positions are modified to asymmetric dimethylarginine: R28 and R62. S-adenosyl-L-methionine is bound by residues 134 to 135, 153 to 154, 178 to 179, and 198 to 201; these read TT, EF, DA, and DVSQ.

It belongs to the methyltransferase superfamily. Fibrillarin family. In terms of assembly, component of box C/D small nucleolar ribonucleoprotein (snoRNP) particles.

It is found in the nucleus. Its subcellular location is the nucleolus. It catalyses the reaction L-glutaminyl-[histone H2A] + S-adenosyl-L-methionine = N(5)-methyl-L-glutaminyl-[histone H2A] + S-adenosyl-L-homocysteine + H(+). Functionally, S-adenosyl-L-methionine-dependent methyltransferase that has the ability to methylate both RNAs and proteins. Involved in pre-rRNA processing. Utilizes the methyl donor S-adenosyl-L-methionine to catalyze the site-specific 2'-hydroxyl methylation of ribose moieties in pre-ribosomal RNA. Site specificity is provided by a guide RNA that base pairs with the substrate. Methylation occurs at a characteristic distance from the sequence involved in base pairing with the guide RNA. Also acts as a protein methyltransferase by mediating methylation of 'Gln-105' of histone H2A (H2AQ105me), a modification that impairs binding of the FACT complex and is specifically present at 35S ribosomal DNA locus. The polypeptide is rRNA 2'-O-methyltransferase fibrillarin (NOP1) (Encephalitozoon cuniculi (strain GB-M1) (Microsporidian parasite)).